Reading from the N-terminus, the 182-residue chain is Large ribosomal subunit protein uL16 (182 aa).

The protein belongs to the universal ribosomal protein uL16 family.

This chain is Large ribosomal subunit protein uL16, found in Thermococcus onnurineus (strain NA1).